Consider the following 252-residue polypeptide: Mannose-P-dolichol utilization defect 1 protein homolog (252 aa).

Positions 34-100 constitute a PQ-loop 1 domain; the sequence is KALLSKGLGL…HGYPFSAWGD (67 aa). 7 helical membrane-spanning segments follow: residues 41–61, 69–89, 98–118, 126–146, 148–168, 180–200, and 207–227; these read LGLA…LKIL, INIV…SYNF, WGDS…VLFF, GLFL…LTPM, VLFT…LSQA, LSAA…FTSI, and MIIL…GQLI. One can recognise a PQ-loop 2 domain in the interval 157–211; sequence IPILLVGKLSQAYTNYQAGSTGQLSAATVIMMFAGSVARIFTSIQETGDFMIILT.

This sequence belongs to the MPDU1 (TC 2.A.43.3) family.

It localises to the membrane. This chain is Mannose-P-dolichol utilization defect 1 protein homolog, found in Drosophila melanogaster (Fruit fly).